Here is a 236-residue protein sequence, read N- to C-terminus: tRNA (guanine-N(1)-)-methyltransferase (236 aa).

S-adenosyl-L-methionine-binding positions include Gly110 and 129-134 (LGDFVL).

The protein belongs to the RNA methyltransferase TrmD family. In terms of assembly, homodimer.

The protein resides in the cytoplasm. The catalysed reaction is guanosine(37) in tRNA + S-adenosyl-L-methionine = N(1)-methylguanosine(37) in tRNA + S-adenosyl-L-homocysteine + H(+). Functionally, specifically methylates guanosine-37 in various tRNAs. In Clostridium perfringens (strain ATCC 13124 / DSM 756 / JCM 1290 / NCIMB 6125 / NCTC 8237 / Type A), this protein is tRNA (guanine-N(1)-)-methyltransferase.